The sequence spans 446 residues: tRNA-2-methylthio-N(6)-dimethylallyladenosine synthase (446 aa).

The MTTase N-terminal domain maps to Lys3 to Arg124. [4Fe-4S] cluster is bound by residues Cys12, Cys48, Cys87, Cys162, Cys166, and Cys169. One can recognise a Radical SAM core domain in the interval Tyr148–Ala380. The region spanning Glu383–Arg446 is the TRAM domain.

It belongs to the methylthiotransferase family. MiaB subfamily. In terms of assembly, monomer. It depends on [4Fe-4S] cluster as a cofactor.

The protein localises to the cytoplasm. It carries out the reaction N(6)-dimethylallyladenosine(37) in tRNA + (sulfur carrier)-SH + AH2 + 2 S-adenosyl-L-methionine = 2-methylsulfanyl-N(6)-dimethylallyladenosine(37) in tRNA + (sulfur carrier)-H + 5'-deoxyadenosine + L-methionine + A + S-adenosyl-L-homocysteine + 2 H(+). Its function is as follows. Catalyzes the methylthiolation of N6-(dimethylallyl)adenosine (i(6)A), leading to the formation of 2-methylthio-N6-(dimethylallyl)adenosine (ms(2)i(6)A) at position 37 in tRNAs that read codons beginning with uridine. The chain is tRNA-2-methylthio-N(6)-dimethylallyladenosine synthase from Rickettsia bellii (strain RML369-C).